The sequence spans 558 residues: CTP synthase (558 aa).

The segment at 1-271 (MAARQQTKHL…DAYVVRRLGL (271 aa)) is amidoligase domain. Position 18 (Ser18) interacts with CTP. Ser18 serves as a coordination point for UTP. Residues 19–24 (SLGKGL) and Asp76 each bind ATP. Residues Asp76 and Glu145 each coordinate Mg(2+). CTP is bound by residues 152 to 154 (DIE), 192 to 197 (KTKPTQ), and Lys228. UTP-binding positions include 192 to 197 (KTKPTQ) and Lys228. The Glutamine amidotransferase type-1 domain maps to 296–545 (TIALVGKYVD…IRAALLHRCP (250 aa)). Gly359 is an L-glutamine binding site. Cys386 serves as the catalytic Nucleophile; for glutamine hydrolysis. L-glutamine contacts are provided by residues 387–390 (LGLQ), Glu410, and Arg471. Residues His518 and Glu520 contribute to the active site.

This sequence belongs to the CTP synthase family. Homotetramer.

The catalysed reaction is UTP + L-glutamine + ATP + H2O = CTP + L-glutamate + ADP + phosphate + 2 H(+). The enzyme catalyses L-glutamine + H2O = L-glutamate + NH4(+). It catalyses the reaction UTP + NH4(+) + ATP = CTP + ADP + phosphate + 2 H(+). It functions in the pathway pyrimidine metabolism; CTP biosynthesis via de novo pathway; CTP from UDP: step 2/2. Allosterically activated by GTP, when glutamine is the substrate; GTP has no effect on the reaction when ammonia is the substrate. The allosteric effector GTP functions by stabilizing the protein conformation that binds the tetrahedral intermediate(s) formed during glutamine hydrolysis. Inhibited by the product CTP, via allosteric rather than competitive inhibition. In terms of biological role, catalyzes the ATP-dependent amination of UTP to CTP with either L-glutamine or ammonia as the source of nitrogen. Regulates intracellular CTP levels through interactions with the four ribonucleotide triphosphates. The polypeptide is CTP synthase (Acidothermus cellulolyticus (strain ATCC 43068 / DSM 8971 / 11B)).